We begin with the raw amino-acid sequence, 689 residues long: Glycine--tRNA ligase beta subunit (689 aa).

It belongs to the class-II aminoacyl-tRNA synthetase family. As to quaternary structure, tetramer of two alpha and two beta subunits.

Its subcellular location is the cytoplasm. It catalyses the reaction tRNA(Gly) + glycine + ATP = glycyl-tRNA(Gly) + AMP + diphosphate. In Dictyoglomus turgidum (strain DSM 6724 / Z-1310), this protein is Glycine--tRNA ligase beta subunit.